A 426-amino-acid chain; its full sequence is Chaperone SurA (426 aa).

The N-terminal stretch at methionine 1 to alanine 13 is a signal peptide. PpiC domains are found at residues serine 164–glutamate 265 and arginine 274–glycine 373.

Its subcellular location is the periplasm. It catalyses the reaction [protein]-peptidylproline (omega=180) = [protein]-peptidylproline (omega=0). Functionally, chaperone involved in the correct folding and assembly of outer membrane proteins. Recognizes specific patterns of aromatic residues and the orientation of their side chains, which are found more frequently in integral outer membrane proteins. May act in both early periplasmic and late outer membrane-associated steps of protein maturation. This chain is Chaperone SurA, found in Pseudomonas fluorescens (strain Pf0-1).